The primary structure comprises 347 residues: Protein RecA (347 aa).

Gly66–Thr73 is a binding site for ATP.

Belongs to the RecA family.

The protein localises to the cytoplasm. Functionally, can catalyze the hydrolysis of ATP in the presence of single-stranded DNA, the ATP-dependent uptake of single-stranded DNA by duplex DNA, and the ATP-dependent hybridization of homologous single-stranded DNAs. It interacts with LexA causing its activation and leading to its autocatalytic cleavage. The protein is Protein RecA of Allochromatium vinosum (Chromatium vinosum).